The chain runs to 156 residues: Small ribosomal subunit protein uS7 (156 aa).

It belongs to the universal ribosomal protein uS7 family. As to quaternary structure, part of the 30S ribosomal subunit. Contacts proteins S9 and S11.

In terms of biological role, one of the primary rRNA binding proteins, it binds directly to 16S rRNA where it nucleates assembly of the head domain of the 30S subunit. Is located at the subunit interface close to the decoding center, probably blocks exit of the E-site tRNA. This Paraburkholderia phymatum (strain DSM 17167 / CIP 108236 / LMG 21445 / STM815) (Burkholderia phymatum) protein is Small ribosomal subunit protein uS7.